Reading from the N-terminus, the 173-residue chain is Crossover junction endodeoxyribonuclease RuvC (173 aa).

Residues D8, E67, and D139 contribute to the active site. Residues D8, E67, and D139 each contribute to the Mg(2+) site.

The protein belongs to the RuvC family. In terms of assembly, homodimer which binds Holliday junction (HJ) DNA. The HJ becomes 2-fold symmetrical on binding to RuvC with unstacked arms; it has a different conformation from HJ DNA in complex with RuvA. In the full resolvosome a probable DNA-RuvA(4)-RuvB(12)-RuvC(2) complex forms which resolves the HJ. Mg(2+) serves as cofactor.

It is found in the cytoplasm. It carries out the reaction Endonucleolytic cleavage at a junction such as a reciprocal single-stranded crossover between two homologous DNA duplexes (Holliday junction).. In terms of biological role, the RuvA-RuvB-RuvC complex processes Holliday junction (HJ) DNA during genetic recombination and DNA repair. Endonuclease that resolves HJ intermediates. Cleaves cruciform DNA by making single-stranded nicks across the HJ at symmetrical positions within the homologous arms, yielding a 5'-phosphate and a 3'-hydroxyl group; requires a central core of homology in the junction. The consensus cleavage sequence is 5'-(A/T)TT(C/G)-3'. Cleavage occurs on the 3'-side of the TT dinucleotide at the point of strand exchange. HJ branch migration catalyzed by RuvA-RuvB allows RuvC to scan DNA until it finds its consensus sequence, where it cleaves and resolves the cruciform DNA. The sequence is that of Crossover junction endodeoxyribonuclease RuvC from Pseudoalteromonas atlantica (strain T6c / ATCC BAA-1087).